Reading from the N-terminus, the 305-residue chain is Uridylate cyclase (305 aa).

The Mn(2+) site is built by aspartate 58 and aspartate 102.

Belongs to the adenylyl cyclase class-4/guanylyl cyclase family. Pyrimidine cyclase subfamily. As to quaternary structure, homodimer. It depends on Mn(2+) as a cofactor.

It localises to the cytoplasm. The catalysed reaction is GTP = 3',5'-cyclic GMP + diphosphate. The enzyme catalyses UTP = 3',5'-cyclic UMP + diphosphate. Functionally, pycsar (pyrimidine cyclase system for antiphage resistance) provides immunity against bacteriophage. The pyrimidine cyclase (PycC) synthesizes cyclic nucleotides in response to infection; these serve as specific second messenger signals. The signals activate the adjacent effector, leading to bacterial cell death and abortive phage infection. A clade D Pycsar system. In terms of biological role, the pyrimidine cyclase gene of a two-gene Pycsar system, generates cyclic UMP (cUMP) from UTP as well as cGMP from GTP to a lesser extent, has little to no activity on ATP or CTP. Expression of this and adjacent effector MePycTM (AC A0A1C5G2D0) probably confers resistance to bacteriophage. The genes are probably only expressed in response to bacteriophage infection. The protein is Uridylate cyclase of Micromonospora echinofusca.